The chain runs to 840 residues: Radial spoke head 10 homolog B (840 aa).

Composition is skewed to basic and acidic residues over residues 1–16 (MVKEKKKADKKGDKSA) and 51–63 (QPKDPGVKREVKS). Positions 1–74 (MVKEKKKADK…SLPNEDTTQY (74 aa)) are disordered. MORN repeat units lie at residues 86-108 (SYEGEKVRGLYEGEGFAIFQGGC), 109-131 (TYQGMFSEGLMHGQGTYIWADGL), 132-154 (KYEGDFVKNIPMNHGIFTWPDGS), 155-177 (TYEGEVVGGMRHGFGMFKCSTQP), 179-201 (SYIGHWCHGKRHGKGSIYYNQEG), 204-226 (WYEGDWIHNIRKGWGIRCYKSGN), 227-249 (IYEGQWENNVRHGEGRMRWLTTN), 251-273 (EYTGQWKHGVQNGLGTHTWFLKR), 284-306 (EYVGEFVNGYRHGHGKFYYASGA), and 307-329 (MYEGEWVSNKKHGMGRLTFKNGR). Positions 758 to 801 (KEKVKENRLHNEAMALQRKMENEELEARLNSLREEEAKRQDYEV) form a coiled coil. The segment at 810–840 (VDAPSSSFTPSPPKEDTVVSSKSITSKKKKK) is disordered.

In terms of assembly, interacts with RSPH6A. Does not appear to be part of the axonemal radial spoke complexes 1 or 2.

It localises to the cytoplasm. The protein resides in the cytoskeleton. The protein localises to the cilium axoneme. It is found in the cell projection. Its subcellular location is the cilium. It localises to the flagellum. May function as part of the axonemal radial spoke complex 3 (RS3). Radial spoke complexes are important for ciliary motility. The protein is Radial spoke head 10 homolog B (RSPH10B) of Bos taurus (Bovine).